The sequence spans 255 residues: MDNVSSAHEYIEHHLTFLTLGKGFWSINIDSMIMVWMVGLLFIGVFRYVAIRGTKGVPGRLQCFIEITFDFVNNLVKEIFKTEDKLIGPLALTIFVWVFLMNSIDLLPVDFVPALTRLFGVEHFRDLPSADVNVPVSMALGVFILIIGYTLKNKGIVGFIKELTTQPFEHPLLYPVNFLLELITLISKPISLGLRLFGNMYAGEMIFILIALMPWWMQWALSVPWALFHILIVFLQAFIFMVLTIVYLAMATEEH.

Helical transmembrane passes span 26 to 46 (SINIDSMIMVWMVGLLFIGVF), 86 to 106 (LIGPLALTIFVWVFLMNSIDL), 131 to 151 (DVNVPVSMALGVFILIIGYTL), 205 to 225 (MIFILIALMPWWMQWALSVPW), and 230 to 250 (ILIVFLQAFIFMVLTIVYLAM).

This sequence belongs to the ATPase A chain family. As to quaternary structure, F-type ATPases have 2 components, CF(1) - the catalytic core - and CF(0) - the membrane proton channel. CF(1) has five subunits: alpha(3), beta(3), gamma(1), delta(1), epsilon(1). CF(0) has three main subunits: a(1), b(2) and c(9-12). The alpha and beta chains form an alternating ring which encloses part of the gamma chain. CF(1) is attached to CF(0) by a central stalk formed by the gamma and epsilon chains, while a peripheral stalk is formed by the delta and b chains.

The protein resides in the cell inner membrane. Its function is as follows. Key component of the proton channel; it plays a direct role in the translocation of protons across the membrane. This Photobacterium profundum (strain SS9) protein is ATP synthase subunit a 2.